Reading from the N-terminus, the 298-residue chain is Probable GTP 3',8-cyclase (298 aa).

The 224-residue stretch at Arg-4–Asp-227 folds into the Radical SAM core domain. Arg-13 serves as a coordination point for GTP. Positions 20 and 24 each coordinate [4Fe-4S] cluster. Tyr-26 is a binding site for S-adenosyl-L-methionine. Cys-27 provides a ligand contact to [4Fe-4S] cluster. Residue Lys-61 coordinates GTP. Gly-65 serves as a coordination point for S-adenosyl-L-methionine. Thr-91 is a binding site for GTP. Position 115 (Ser-115) interacts with S-adenosyl-L-methionine. Lys-152 is a GTP binding site. [4Fe-4S] cluster-binding residues include Cys-243 and Cys-246. Arg-248–Arg-250 serves as a coordination point for GTP. Cys-260 provides a ligand contact to [4Fe-4S] cluster.

It belongs to the radical SAM superfamily. MoaA family. [4Fe-4S] cluster is required as a cofactor.

The enzyme catalyses GTP + AH2 + S-adenosyl-L-methionine = (8S)-3',8-cyclo-7,8-dihydroguanosine 5'-triphosphate + 5'-deoxyadenosine + L-methionine + A + H(+). It participates in cofactor biosynthesis; molybdopterin biosynthesis. Its function is as follows. Catalyzes the cyclization of GTP to (8S)-3',8-cyclo-7,8-dihydroguanosine 5'-triphosphate. This chain is Probable GTP 3',8-cyclase, found in Methanococcus maripaludis (strain C6 / ATCC BAA-1332).